Here is a 671-residue protein sequence, read N- to C-terminus: Kinesin-like protein KIF2C (671 aa).

The tract at residues Met-1–Ile-200 is globular. The segment at Gln-37 to Thr-58 is disordered. Position 41 is a phosphoserine; by AURKB (Ser-41). The Microtubule tip localization signal signature appears at Ser-44–Pro-47. Residues Ser-55, Ser-57, Ser-61, Ser-112, Ser-121, Ser-133, and Ser-138 each carry the phosphoserine modification. The disordered stretch occupies residues Ala-115–Ser-138. The span at Ser-121–Asn-132 shows a compositional bias: polar residues. A negative regulator of microtubule-binding region spans residues Glu-153 to Glu-184. One can recognise a Kinesin motor domain in the interval Arg-204–Leu-534. ATP is bound by residues Arg-210 and Gly-294 to Thr-301. Ser-465 is modified (phosphoserine). The disordered stretch occupies residues Glu-533–Glu-568. Residues Glu-566–Gln-601 are a coiled coil. Phosphoserine is present on Ser-576.

It belongs to the TRAFAC class myosin-kinesin ATPase superfamily. Kinesin family. MCAK/KIF2 subfamily. Interacts with CENPH. Interacts with MTUS2/TIP150; the interaction is direct. Interacts with MAPRE1; the interaction is direct, regulated by phosphorylation and is probably required for targeting to growing microtubule plus ends. Interacts with KIF18B at microtubule tips; this interaction increases the affinity of both partners for microtubule plus ends and is required for robust microtubule depolymerization. Phosphorylation by AURKA or AURKB strongly reduces KIF18B-binding. In terms of processing, phosphorylation by AURKB, regulates association with centromeres and kinetochores and the microtubule depolymerization activity. Ubiquitinated. Testis. Localized to the meiotically active cells of the seminiferous epithelia in the testis.

The protein resides in the cytoplasm. It localises to the cytoskeleton. Its subcellular location is the nucleus. The protein localises to the chromosome. It is found in the centromere. The protein resides in the kinetochore. In terms of biological role, in complex with KIF18B, constitutes the major microtubule plus-end depolymerizing activity in mitotic cells. Regulates the turnover of microtubules at the kinetochore and functions in chromosome segregation during mitosis. Plays a role in chromosome congression and is required for the lateral to end-on conversion of the chromosome-microtubule attachment. This is Kinesin-like protein KIF2C (Kif2c) from Rattus norvegicus (Rat).